The sequence spans 110 residues: Large ribosomal subunit protein uL22 (110 aa).

The protein belongs to the universal ribosomal protein uL22 family. In terms of assembly, part of the 50S ribosomal subunit.

Functionally, this protein binds specifically to 23S rRNA; its binding is stimulated by other ribosomal proteins, e.g. L4, L17, and L20. It is important during the early stages of 50S assembly. It makes multiple contacts with different domains of the 23S rRNA in the assembled 50S subunit and ribosome. In terms of biological role, the globular domain of the protein is located near the polypeptide exit tunnel on the outside of the subunit, while an extended beta-hairpin is found that lines the wall of the exit tunnel in the center of the 70S ribosome. In Mycoplasma mobile (strain ATCC 43663 / 163K / NCTC 11711) (Mesomycoplasma mobile), this protein is Large ribosomal subunit protein uL22.